Consider the following 484-residue polypeptide: tRNA sulfurtransferase (484 aa).

Residues 63–167 (EAFADRLSCI…RENLYLVVNR (105 aa)) enclose the THUMP domain. Residues 185 to 186 (LI), Lys-267, Gly-289, and Gln-298 contribute to the ATP site. An intrachain disulfide couples Cys-346 to Cys-458. Positions 406–484 (VNSNEVIIDV…GYENVKVYRP (79 aa)) constitute a Rhodanese domain. Cys-458 functions as the Cysteine persulfide intermediate in the catalytic mechanism.

The protein belongs to the ThiI family.

It localises to the cytoplasm. The catalysed reaction is [ThiI sulfur-carrier protein]-S-sulfanyl-L-cysteine + a uridine in tRNA + 2 reduced [2Fe-2S]-[ferredoxin] + ATP + H(+) = [ThiI sulfur-carrier protein]-L-cysteine + a 4-thiouridine in tRNA + 2 oxidized [2Fe-2S]-[ferredoxin] + AMP + diphosphate. It catalyses the reaction [ThiS sulfur-carrier protein]-C-terminal Gly-Gly-AMP + S-sulfanyl-L-cysteinyl-[cysteine desulfurase] + AH2 = [ThiS sulfur-carrier protein]-C-terminal-Gly-aminoethanethioate + L-cysteinyl-[cysteine desulfurase] + A + AMP + 2 H(+). It participates in cofactor biosynthesis; thiamine diphosphate biosynthesis. Its function is as follows. Catalyzes the ATP-dependent transfer of a sulfur to tRNA to produce 4-thiouridine in position 8 of tRNAs, which functions as a near-UV photosensor. Also catalyzes the transfer of sulfur to the sulfur carrier protein ThiS, forming ThiS-thiocarboxylate. This is a step in the synthesis of thiazole, in the thiamine biosynthesis pathway. The sulfur is donated as persulfide by IscS. This Shewanella sediminis (strain HAW-EB3) protein is tRNA sulfurtransferase.